Reading from the N-terminus, the 230-residue chain is Cytidylate kinase (230 aa).

12–20 (GPSGAGKGT) lines the ATP pocket.

Belongs to the cytidylate kinase family. Type 1 subfamily.

Its subcellular location is the cytoplasm. It carries out the reaction CMP + ATP = CDP + ADP. It catalyses the reaction dCMP + ATP = dCDP + ADP. This is Cytidylate kinase from Shewanella pealeana (strain ATCC 700345 / ANG-SQ1).